A 720-amino-acid polypeptide reads, in one-letter code: Ciliated left-right organizer metallopeptidase (720 aa).

The signal sequence occupies residues 1–25 (MTVSFSMFQIYRLVWLSFMTSMCLS). Residues 26-668 (ACIHDSVLQE…ALYVSHMLYS (643 aa)) lie on the Extracellular side of the membrane. Residue histidine 243 coordinates Zn(2+). Residue glutamate 244 is part of the active site. Zn(2+) contacts are provided by histidine 247 and histidine 322. A helical transmembrane segment spans residues 669–689 (YVIGGGCCAVCGAAIIFALFW). Residues 690–720 (YKLRRQFLRVGSSYPPETSNHERPQIPADLV) are Cytoplasmic-facing.

Belongs to the peptidase M8 family. Zn(2+) serves as cofactor.

Its subcellular location is the membrane. Putative metalloprotease playing a role in the process of LR patterning. The polypeptide is Ciliated left-right organizer metallopeptidase (cirop) (Xenopus laevis (African clawed frog)).